A 329-amino-acid polypeptide reads, in one-letter code: Olfactory receptor 52L1 (329 aa).

Topologically, residues 1–43 (MTLVSFFSFLSKPLIMLLSNSSWRLSQPSFLLVGIPGLEESQH) are extracellular. Residue asparagine 20 is glycosylated (N-linked (GlcNAc...) asparagine). The chain crosses the membrane as a helical span at residues 44–64 (WIALPLGILYLLALVGNVTIL). Residues 65–72 (FIIWMDPS) lie on the Cytoplasmic side of the membrane. Residues 73 to 93 (LHQSMYLFLSMLAAIDLVLAS) traverse the membrane as a helical segment. The Extracellular portion of the chain corresponds to 94–117 (STAPKALAVLLVHAHEIGYIVCLI). Cysteine 115 and cysteine 207 are joined by a disulfide. The chain crosses the membrane as a helical span at residues 118–138 (QMFFIHAFSSMESGVLVAMAL). Over 139–157 (DRYVAICHPLHHSTILHPG) the chain is Cytoplasmic. The helical transmembrane segment at 158-178 (VIGRIGMVVLVRGLLLLIPFP) threads the bilayer. At 179–214 (ILLGTLIFCQATIIGHAYCEHMAVVKLACSETTVNR) the chain is on the extracellular side. Residues 215–235 (AYGLTMALLVIGLDVLAIGVS) form a helical membrane-spanning segment. Residues 236–255 (YAHILQAVLKVPGSEARLKA) are Cytoplasmic-facing. A helical membrane pass occupies residues 256–276 (FSTCGSHICVILVFYVPGIFS). The Extracellular portion of the chain corresponds to 277–291 (FLTHRFGHHVPHHVH). Residues 292–312 (VLLATRYLLMPPALNPLVYGV) traverse the membrane as a helical segment. Topologically, residues 313-329 (KTQQIRQRVLRVFTQKD) are cytoplasmic.

The protein belongs to the G-protein coupled receptor 1 family.

It localises to the cell membrane. Odorant receptor. This is Olfactory receptor 52L1 (OR52L1) from Homo sapiens (Human).